The following is a 308-amino-acid chain: MSAQKPGLHPRNRHQHRYDLAALCQTTPELTSFLTRTPAGEQSVDFANPQAVKALNKALLAHFYAVTHWDIPQGFLCPPVPGRADYIHHLADLLGETTGSIPVQANILDVGVGANCIYPLIGAYEYGWRFTGSEISEAAMSSAQAIIQANTGLSRAIRLRRQKDSTAIFTGIIHKNEYYDATLCNPPFHDSAAAARAGSERKRRNLGQKRDDVLNFGGQQQELCCEGGEVTFIKKMIAESQTFRRQVLWFTTLVSRGENLPPLYRALTEVGAVKVVKKEMAQGQKQSRFIAWTFMDDDQRRRFITRKR.

Belongs to the methyltransferase superfamily. METTL16/RlmF family.

The protein localises to the cytoplasm. The catalysed reaction is adenosine(1618) in 23S rRNA + S-adenosyl-L-methionine = N(6)-methyladenosine(1618) in 23S rRNA + S-adenosyl-L-homocysteine + H(+). In terms of biological role, specifically methylates the adenine in position 1618 of 23S rRNA. This Salmonella arizonae (strain ATCC BAA-731 / CDC346-86 / RSK2980) protein is Ribosomal RNA large subunit methyltransferase F.